The following is a 689-amino-acid chain: Glycine--tRNA ligase beta subunit (689 aa).

The protein belongs to the class-II aminoacyl-tRNA synthetase family. Tetramer of two alpha and two beta subunits.

The protein localises to the cytoplasm. It carries out the reaction tRNA(Gly) + glycine + ATP = glycyl-tRNA(Gly) + AMP + diphosphate. This is Glycine--tRNA ligase beta subunit from Mannheimia succiniciproducens (strain KCTC 0769BP / MBEL55E).